A 261-amino-acid polypeptide reads, in one-letter code: Protein STAY-GREEN, chloroplastic (261 aa).

A chloroplast-targeting transit peptide spans 1–54 (MDTLTSAPLLTTKFKPSFSPQQKPCFPHRRRFENGKKNQSIVPVARLFGPAIFE).

It belongs to the staygreen family.

It is found in the plastid. The protein resides in the chloroplast. In terms of biological role, probably involved in the disassembling mechanism of the intact light-harvesting complex of photosystem II (LHCII) in the thylakoid membranes. Required for the chlorophyll breakdown pathway. Acts independent and upstream of pheophorbide a oxygenase (PAO). In Pisum sativum (Garden pea), this protein is Protein STAY-GREEN, chloroplastic (SGR).